The following is a 371-amino-acid chain: Protein STRICTOSIDINE SYNTHASE-LIKE 7 (371 aa).

The first 25 residues, 1-25 (MPVLFSSRSLILSIIVPLLISIALY), serve as a signal peptide directing secretion. 3 N-linked (GlcNAc...) asparagine glycosylation sites follow: Asn-101, Asn-137, and Asn-285. Tyr-303 carries the phosphotyrosine modification.

It belongs to the strictosidine synthase family.

The protein localises to the vacuole. The chain is Protein STRICTOSIDINE SYNTHASE-LIKE 7 from Arabidopsis thaliana (Mouse-ear cress).